A 109-amino-acid chain; its full sequence is UPF0060 membrane protein PSPA7_1846 (109 aa).

4 helical membrane-spanning segments follow: residues 5–25 (LWFV…YLWL), 27–47 (LGKS…FALL), 59–79 (AYAA…AFVE), and 84–104 (LWSD…VLFG).

This sequence belongs to the UPF0060 family.

It localises to the cell inner membrane. The protein is UPF0060 membrane protein PSPA7_1846 of Pseudomonas paraeruginosa (strain DSM 24068 / PA7) (Pseudomonas aeruginosa (strain PA7)).